The following is a 305-amino-acid chain: tRNA pseudouridine synthase B (305 aa).

The Nucleophile role is filled by Asp39.

Belongs to the pseudouridine synthase TruB family. Type 1 subfamily.

It catalyses the reaction uridine(55) in tRNA = pseudouridine(55) in tRNA. In terms of biological role, responsible for synthesis of pseudouridine from uracil-55 in the psi GC loop of transfer RNAs. The sequence is that of tRNA pseudouridine synthase B from Staphylococcus haemolyticus (strain JCSC1435).